A 161-amino-acid chain; its full sequence is 2-C-methyl-D-erythritol 2,4-cyclodiphosphate synthase (161 aa).

Asp11 and His13 together coordinate a divalent metal cation. Residues Asp11–His13 and His37–Ser38 contribute to the 4-CDP-2-C-methyl-D-erythritol 2-phosphate site. His45 contributes to the a divalent metal cation binding site. 4-CDP-2-C-methyl-D-erythritol 2-phosphate-binding positions include Asp59–Gly61, Thr135–Glu138, and Arg145.

It belongs to the IspF family. As to quaternary structure, homotrimer. The cofactor is a divalent metal cation.

It catalyses the reaction 4-CDP-2-C-methyl-D-erythritol 2-phosphate = 2-C-methyl-D-erythritol 2,4-cyclic diphosphate + CMP. Its pathway is isoprenoid biosynthesis; isopentenyl diphosphate biosynthesis via DXP pathway; isopentenyl diphosphate from 1-deoxy-D-xylulose 5-phosphate: step 4/6. Its function is as follows. Involved in the biosynthesis of isopentenyl diphosphate (IPP) and dimethylallyl diphosphate (DMAPP), two major building blocks of isoprenoid compounds. Catalyzes the conversion of 4-diphosphocytidyl-2-C-methyl-D-erythritol 2-phosphate (CDP-ME2P) to 2-C-methyl-D-erythritol 2,4-cyclodiphosphate (ME-CPP) with a corresponding release of cytidine 5-monophosphate (CMP). This Synechocystis sp. (strain ATCC 27184 / PCC 6803 / Kazusa) protein is 2-C-methyl-D-erythritol 2,4-cyclodiphosphate synthase.